The primary structure comprises 488 residues: uncharacterized protein (488 aa).

12 helical membrane-spanning segments follow: residues 2-22, 27-47, 59-79, 106-126, 176-196, 241-261, 275-295, 314-334, 347-367, 368-388, 438-458, and 461-481; these read FGLP…VFLV, VHAF…GGMS, FGGT…MGSV, LAIT…FVIL, IGAM…GIVL, LLPI…HLFV, IVSF…ISVY, VKTA…GAVL, IANL…LVRF, IQGS…PILA, VPTT…NLIF, and DGSV…LFYI.

The protein belongs to the GntP permease family.

It is found in the cell inner membrane. This is an uncharacterized protein from Haemophilus influenzae (strain ATCC 51907 / DSM 11121 / KW20 / Rd).